The following is a 754-amino-acid chain: tRNA 5-methylaminomethyl-2-thiouridine biosynthesis bifunctional protein MnmC (754 aa).

Positions 1–320 are tRNA (mnm(5)s(2)U34)-methyltransferase; sequence MPSCYEHSAQ…RRQAVNNSDS (320 aa). The tract at residues 324-754 is FAD-dependent cmnm(5)s(2)U34 oxidoreductase; that stretch reads IGGGIAGACL…RKLLKGKALC (431 aa).

The protein in the N-terminal section; belongs to the methyltransferase superfamily. tRNA (mnm(5)s(2)U34)-methyltransferase family. It in the C-terminal section; belongs to the DAO family. FAD serves as cofactor.

It localises to the cytoplasm. The enzyme catalyses 5-aminomethyl-2-thiouridine(34) in tRNA + S-adenosyl-L-methionine = 5-methylaminomethyl-2-thiouridine(34) in tRNA + S-adenosyl-L-homocysteine + H(+). Its function is as follows. Catalyzes the last two steps in the biosynthesis of 5-methylaminomethyl-2-thiouridine (mnm(5)s(2)U) at the wobble position (U34) in tRNA. Catalyzes the FAD-dependent demodification of cmnm(5)s(2)U34 to nm(5)s(2)U34, followed by the transfer of a methyl group from S-adenosyl-L-methionine to nm(5)s(2)U34, to form mnm(5)s(2)U34. This Shewanella denitrificans (strain OS217 / ATCC BAA-1090 / DSM 15013) protein is tRNA 5-methylaminomethyl-2-thiouridine biosynthesis bifunctional protein MnmC.